The following is a 415-amino-acid chain: Serine hydroxymethyltransferase 1 (415 aa).

Residues Leu-122 and 126-128 (GHL) contribute to the (6S)-5,6,7,8-tetrahydrofolate site. Lys-230 carries the N6-(pyridoxal phosphate)lysine modification.

The protein belongs to the SHMT family. Homodimer. The cofactor is pyridoxal 5'-phosphate.

The protein resides in the cytoplasm. It catalyses the reaction (6R)-5,10-methylene-5,6,7,8-tetrahydrofolate + glycine + H2O = (6S)-5,6,7,8-tetrahydrofolate + L-serine. It functions in the pathway one-carbon metabolism; tetrahydrofolate interconversion. The protein operates within amino-acid biosynthesis; glycine biosynthesis; glycine from L-serine: step 1/1. Catalyzes the reversible interconversion of serine and glycine with tetrahydrofolate (THF) serving as the one-carbon carrier. This reaction serves as the major source of one-carbon groups required for the biosynthesis of purines, thymidylate, methionine, and other important biomolecules. Also exhibits THF-independent aldolase activity toward beta-hydroxyamino acids, producing glycine and aldehydes, via a retro-aldol mechanism. The polypeptide is Serine hydroxymethyltransferase 1 (Cupriavidus pinatubonensis (strain JMP 134 / LMG 1197) (Cupriavidus necator (strain JMP 134))).